Consider the following 810-residue polypeptide: Plasminogen (810 aa).

Residues 1-19 (MQRKELVLLFLLFLQPGHG) form the signal peptide. The PAN domain occupies 20-98 (IPLDDYVTTQ…RDVILFEKKM (79 aa)). Intrachain disulfides connect cysteine 49/cysteine 73, cysteine 53/cysteine 61, cysteine 103/cysteine 181, cysteine 124/cysteine 164, cysteine 152/cysteine 176, cysteine 185/cysteine 262, cysteine 188/cysteine 316, cysteine 206/cysteine 245, cysteine 234/cysteine 257, cysteine 275/cysteine 352, cysteine 296/cysteine 335, cysteine 324/cysteine 347, cysteine 379/cysteine 456, cysteine 400/cysteine 439, cysteine 428/cysteine 451, cysteine 482/cysteine 561, cysteine 503/cysteine 544, cysteine 532/cysteine 556, cysteine 569/cysteine 685, cysteine 579/cysteine 586, cysteine 607/cysteine 623, cysteine 699/cysteine 766, cysteine 729/cysteine 745, and cysteine 756/cysteine 784. Kringle domains follow at residues 103–181 (CKVG…IIQC), 185–262 (CMHC…IPRC), 275–352 (CLMG…IPDC), 379–456 (CYQG…LKKC), and 482–561 (CIID…IPHC). The N-linked (GlcNAc...) asparagine glycan is linked to asparagine 339. The interval 398–418 (KKCQPWTSMRPHRHSKTPENY) is disordered. The Peptidase S1 domain occupies 582-808 (RVGGCVAHPH…YVSWLQDVMR (227 aa)). Serine 598 carries the post-translational modification Phosphoserine. Active-site charge relay system residues include histidine 622 and aspartate 665. Residue serine 760 is the Charge relay system of the active site.

This sequence belongs to the peptidase S1 family. Plasminogen subfamily. As to quaternary structure, interacts with CSPG4 and AMOT. Interacts (via the Kringle domains) with HRG; the interaction tethers PLG to the cell surface and enhances its activation. Interacts (via Kringle 4 domain) with ADA; the interaction stimulates PLG activation when in complex with DPP4. Angiostatin: Interacts with ATP5F1A; the interaction inhibits most of the angiogenic effects of angiostatin. In the presence of the inhibitor, the activation involves only cleavage after Arg-582, yielding two chains held together by two disulfide bonds. In the absence of the inhibitor, the activation involves additionally the removal of the activation peptide.

It localises to the secreted. It catalyses the reaction Preferential cleavage: Lys-|-Xaa &gt; Arg-|-Xaa, higher selectivity than trypsin. Converts fibrin into soluble products.. Converted into plasmin by plasminogen activators, both plasminogen and its activator being bound to fibrin. Cannot be activated with streptokinase. Its function is as follows. Plasmin dissolves the fibrin of blood clots and acts as a proteolytic factor in a variety of other processes including embryonic development, tissue remodeling, tumor invasion, and inflammation. In ovulation, weakens the walls of the Graafian follicle. It activates the urokinase-type plasminogen activator, collagenases and several complement zymogens, such as C1, C4 and C5. Cleavage of fibronectin and laminin leads to cell detachment and apoptosis. Also cleaves fibrin, thrombospondin and von Willebrand factor. Its role in tissue remodeling and tumor invasion may be modulated by CSPG4. Binds to cells. The sequence is that of Plasminogen (PLG) from Erinaceus europaeus (Western European hedgehog).